The sequence spans 877 residues: Telomere length regulation protein clk-2 (877 aa).

Polar residues predominate over residues 488 to 501; sequence NKDSAAITSKNNLR. A disordered region spans residues 488-509; that stretch reads NKDSAAITSKNNLRLDSDDDED.

Belongs to the TEL2 family.

Its subcellular location is the nucleus. It localises to the chromosome. It is found in the telomere. Its function is as follows. DNA damage checkpoint protein required for DNA damage-induced cell cycle arrest and apoptosis, thereby playing a role in genome stability. Regulator of telomere length. The protein is Telomere length regulation protein clk-2 (clk-2) of Caenorhabditis elegans.